A 343-amino-acid chain; its full sequence is Glyceraldehyde-3-phosphate dehydrogenase (343 aa).

Residues 13 to 14 (TI) and Gly-111 each bind NAD(+). 140–142 (SCN) contacts D-glyceraldehyde 3-phosphate. The active-site Nucleophile is Cys-141. Arg-169 lines the NAD(+) pocket. 195–196 (HA) is a binding site for D-glyceraldehyde 3-phosphate. Gln-303 lines the NAD(+) pocket.

It belongs to the glyceraldehyde-3-phosphate dehydrogenase family. Homotetramer.

It localises to the cytoplasm. It carries out the reaction D-glyceraldehyde 3-phosphate + phosphate + NADP(+) = (2R)-3-phospho-glyceroyl phosphate + NADPH + H(+). It catalyses the reaction D-glyceraldehyde 3-phosphate + phosphate + NAD(+) = (2R)-3-phospho-glyceroyl phosphate + NADH + H(+). It functions in the pathway carbohydrate degradation; glycolysis; pyruvate from D-glyceraldehyde 3-phosphate: step 1/5. This Sulfurisphaera tokodaii (strain DSM 16993 / JCM 10545 / NBRC 100140 / 7) (Sulfolobus tokodaii) protein is Glyceraldehyde-3-phosphate dehydrogenase.